The chain runs to 1497 residues: DNA-directed RNA polymerase subunit beta (1497 aa).

It belongs to the RNA polymerase beta chain family. As to quaternary structure, the RNAP catalytic core consists of 2 alpha, 1 beta, 1 beta' and 1 omega subunit. When a sigma factor is associated with the core the holoenzyme is formed, which can initiate transcription.

The catalysed reaction is RNA(n) + a ribonucleoside 5'-triphosphate = RNA(n+1) + diphosphate. Its function is as follows. DNA-dependent RNA polymerase catalyzes the transcription of DNA into RNA using the four ribonucleoside triphosphates as substrates. This is DNA-directed RNA polymerase subunit beta from Trichlorobacter lovleyi (strain ATCC BAA-1151 / DSM 17278 / SZ) (Geobacter lovleyi).